The following is a 601-amino-acid chain: Putative purine permease C1399.01c (601 aa).

12 helical membrane-spanning segments follow: residues 64 to 84 (VPVL…VGGV), 102 to 122 (TNYL…IQIA), 131 to 151 (YYIG…VSVA), 179 to 199 (YGAF…MSFI), 207 to 227 (LFPP…LISS), 264 to 284 (GWGS…IIII), 294 to 314 (TTSV…TGYW), 337 to 357 (IYGP…MEAI), 424 to 444 (FFCA…AVFV), 450 to 470 (VLGG…IAII), 481 to 501 (FILT…DWFT), and 522 to 542 (LVME…NLIL).

Belongs to the nucleobase:cation symporter-2 (NCS2) (TC 2.A.40) family.

Its subcellular location is the vacuole membrane. This chain is Putative purine permease C1399.01c, found in Schizosaccharomyces pombe (strain 972 / ATCC 24843) (Fission yeast).